The following is a 143-amino-acid chain: MAPKKKKVAGLIKLQIQAGAANPAPPVGPALGQHGVNIMEFCKAYNAATESQRGNIVPVEITVYEDRSFSFITKTPPAAQLIKKAAGVAKGSGVPHTTKVGKITMDQVREIAETKKEDLNANDIDAAAKIIAGTARSMGIEVN.

The protein belongs to the universal ribosomal protein uL11 family. Part of the ribosomal stalk of the 50S ribosomal subunit. Interacts with L10 and the large rRNA to form the base of the stalk. L10 forms an elongated spine to which L12 dimers bind in a sequential fashion forming a multimeric L10(L12)X complex. Post-translationally, one or more lysine residues are methylated.

Its function is as follows. Forms part of the ribosomal stalk which helps the ribosome interact with GTP-bound translation factors. This is Large ribosomal subunit protein uL11 from Kocuria rhizophila (strain ATCC 9341 / DSM 348 / NBRC 103217 / DC2201).